A 135-amino-acid chain; its full sequence is Ribonuclease P protein component (135 aa).

It belongs to the RnpA family. Consists of a catalytic RNA component (M1 or rnpB) and a protein subunit.

The enzyme catalyses Endonucleolytic cleavage of RNA, removing 5'-extranucleotides from tRNA precursor.. In terms of biological role, RNaseP catalyzes the removal of the 5'-leader sequence from pre-tRNA to produce the mature 5'-terminus. It can also cleave other RNA substrates such as 4.5S RNA. The protein component plays an auxiliary but essential role in vivo by binding to the 5'-leader sequence and broadening the substrate specificity of the ribozyme. The protein is Ribonuclease P protein component of Xylella fastidiosa (strain 9a5c).